The primary structure comprises 214 residues: Thiamine import ATP-binding protein ThiQ (214 aa).

An ABC transporter domain is found at 2 to 212 (IKLNTIFDYP…KNGQATEREI (211 aa)). 31–38 (GESGAGKS) serves as a coordination point for ATP.

It belongs to the ABC transporter superfamily. Thiamine importer (TC 3.A.1.19.1) family. In terms of assembly, the complex is composed of two ATP-binding proteins (ThiQ), two transmembrane proteins (ThiP) and a solute-binding protein (ThiB).

It localises to the cell inner membrane. It catalyses the reaction thiamine(out) + ATP + H2O = thiamine(in) + ADP + phosphate + H(+). Its function is as follows. Part of the ABC transporter complex ThiBPQ involved in thiamine import. Responsible for energy coupling to the transport system. The protein is Thiamine import ATP-binding protein ThiQ of Histophilus somni (strain 129Pt) (Haemophilus somnus).